The following is a 410-amino-acid chain: Chorismate synthase (410 aa).

NADP(+) is bound by residues Arg-40 and Arg-46. FMN is bound by residues 129 to 131 (RSS), 257 to 258 (QA), Gly-302, 317 to 321 (KPISS), and Arg-343.

Belongs to the chorismate synthase family. In terms of assembly, homotetramer. FMNH2 serves as cofactor.

The enzyme catalyses 5-O-(1-carboxyvinyl)-3-phosphoshikimate = chorismate + phosphate. It functions in the pathway metabolic intermediate biosynthesis; chorismate biosynthesis; chorismate from D-erythrose 4-phosphate and phosphoenolpyruvate: step 7/7. Its function is as follows. Catalyzes the anti-1,4-elimination of the C-3 phosphate and the C-6 proR hydrogen from 5-enolpyruvylshikimate-3-phosphate (EPSP) to yield chorismate, which is the branch point compound that serves as the starting substrate for the three terminal pathways of aromatic amino acid biosynthesis. This reaction introduces a second double bond into the aromatic ring system. This is Chorismate synthase from Chlorobaculum parvum (strain DSM 263 / NCIMB 8327) (Chlorobium vibrioforme subsp. thiosulfatophilum).